The chain runs to 194 residues: Protein cholesin (194 aa).

A disordered region spans residues 1–83 (MAKQKRKVPE…RKKEERQRLR (83 aa)). Ser23 and Ser59 each carry phosphoserine. The segment covering 61 to 83 (EEQRVLERKLKKERKKEERQRLR) has biased composition (basic and acidic residues). Phosphoserine is present on residues Ser97 and Ser175.

Secreted from the instestine, secretion is induced by feeding and cholesterol absorption.

Its subcellular location is the secreted. Hormone secreted from the intestine in response to cholesterol, where it acts to inhibit cholesterol synthesis in the liver and VLDL secretion,leading to a reduction in circulating cholesterol levels. Acts through binding to its receptor, GPR146. The protein is Protein cholesin of Homo sapiens (Human).